The sequence spans 154 residues: Catabolic 3-dehydroquinase (154 aa).

The active-site Proton acceptor is Tyr25. Asn79, His85, and Asp92 together coordinate substrate. The active-site Proton donor is the His105. Substrate-binding positions include 106–107 (IS) and Arg116.

Belongs to the type-II 3-dehydroquinase family. Homododecamer. Adopts a ring-like structure, composed of an arrangement of two hexameric rings stacked on top of one another.

The enzyme catalyses 3-dehydroquinate = 3-dehydroshikimate + H2O. It participates in aromatic compound metabolism; 3,4-dihydroxybenzoate biosynthesis; 3,4-dihydroxybenzoate from 3-dehydroquinate: step 1/2. Is involved in the catabolism of quinate. Allows the utilization of quinate as carbon source via the beta-ketoadipate pathway. The polypeptide is Catabolic 3-dehydroquinase (Botryotinia fuckeliana (strain B05.10) (Noble rot fungus)).